Here is a 341-residue protein sequence, read N- to C-terminus: Putative casein kinase I C03C10.2 (341 aa).

In terms of domain architecture, Protein kinase spans 50 to 326; the sequence is WSIEGVIGNG…KCLYSPKSLL (277 aa). ATP contacts are provided by residues 56-64 and Lys-79; that span reads IGNGGYGQI. The Proton acceptor role is filled by Asp-173.

It belongs to the protein kinase superfamily. CK1 Ser/Thr protein kinase family. Casein kinase I subfamily.

The enzyme catalyses L-seryl-[protein] + ATP = O-phospho-L-seryl-[protein] + ADP + H(+). The catalysed reaction is L-threonyl-[protein] + ATP = O-phospho-L-threonyl-[protein] + ADP + H(+). The sequence is that of Putative casein kinase I C03C10.2 from Caenorhabditis elegans.